Consider the following 90-residue polypeptide: Barrier-to-autointegration factor A (90 aa).

The protein belongs to the BAF family. In terms of assembly, homodimer. Interacts with nemp1a and nemp1b. Phosphorylated during S and M phases.

It is found in the nucleus. It localises to the chromosome. The protein localises to the nucleus envelope. The protein resides in the cytoplasm. Its function is as follows. Non-specific DNA-binding protein that plays key roles in mitotic nuclear reassembly, chromatin organization, DNA damage response, gene expression and intrinsic immunity against foreign DNA. Contains two non-specific double-stranded DNA (dsDNA)-binding sites which promote DNA cross-bridging. Plays a key role in nuclear membrane reformation at the end of mitosis by driving formation of a single nucleus in a spindle-independent manner. Transiently cross-bridges anaphase chromosomes via its ability to bridge distant DNA sites, leading to the formation of a dense chromatin network at the chromosome ensemble surface that limits membranes to the surface. Also acts as a negative regulator of innate immune activation by restricting CGAS activity toward self-DNA upon acute loss of nuclear membrane integrity. Outcompetes CGAS for DNA-binding, thereby preventing CGAS activation and subsequent damaging autoinflammatory responses. Also involved in DNA damage response; acts by inhibiting the ADP-ribosyltransferase activity of PARP1. Involved in the recognition of exogenous dsDNA in the cytosol: associates with exogenous dsDNA immediately after its appearance in the cytosol at endosome breakdown and is required to avoid autophagy. This chain is Barrier-to-autointegration factor A (banf1-a), found in Xenopus laevis (African clawed frog).